Here is a 100-residue protein sequence, read N- to C-terminus: NADH-quinone oxidoreductase subunit K (100 aa).

Helical transmembrane passes span methionine 1–glycine 21, isoleucine 28–alanine 48, and phenylalanine 64–phenylalanine 84.

The protein belongs to the complex I subunit 4L family. As to quaternary structure, NDH-1 is composed of 14 different subunits. Subunits NuoA, H, J, K, L, M, N constitute the membrane sector of the complex.

Its subcellular location is the cell inner membrane. The enzyme catalyses a quinone + NADH + 5 H(+)(in) = a quinol + NAD(+) + 4 H(+)(out). In terms of biological role, NDH-1 shuttles electrons from NADH, via FMN and iron-sulfur (Fe-S) centers, to quinones in the respiratory chain. The immediate electron acceptor for the enzyme in this species is believed to be ubiquinone. Couples the redox reaction to proton translocation (for every two electrons transferred, four hydrogen ions are translocated across the cytoplasmic membrane), and thus conserves the redox energy in a proton gradient. In Helicobacter acinonychis (strain Sheeba), this protein is NADH-quinone oxidoreductase subunit K.